We begin with the raw amino-acid sequence, 233 residues long: Tetrahydromethanopterin S-methyltransferase subunit D (233 aa).

6 consecutive transmembrane segments (helical) span residues 4 to 24 (LLLIGAITAGGVLIGGGVHFV), 39 to 59 (VGTGTAMLAAGAGLTGLITAA), 67 to 87 (LMIMAAGAVGSMLMIGITMLV), 133 to 153 (FVSGIIGGALGGIGGGLIYWA), 166 to 186 (MGAAGVAAIFAVGIFFINAVI), and 209 to 229 (GIVACLIASIVAGALSTLLVY).

It belongs to the MtrD family. In terms of assembly, the complex is composed of 8 subunits; MtrA, MtrB, MtrC, MtrD, MtrE, MtrF, MtrG and MtrH.

The protein localises to the cell membrane. The catalysed reaction is 5-methyl-5,6,7,8-tetrahydromethanopterin + coenzyme M + 2 Na(+)(in) = 5,6,7,8-tetrahydromethanopterin + methyl-coenzyme M + 2 Na(+)(out). The protein operates within one-carbon metabolism; methanogenesis from CO(2); methyl-coenzyme M from 5,10-methylene-5,6,7,8-tetrahydromethanopterin: step 2/2. In terms of biological role, part of a complex that catalyzes the formation of methyl-coenzyme M and tetrahydromethanopterin from coenzyme M and methyl-tetrahydromethanopterin. This is an energy-conserving, sodium-ion translocating step. This chain is Tetrahydromethanopterin S-methyltransferase subunit D, found in Methanothermobacter marburgensis (strain ATCC BAA-927 / DSM 2133 / JCM 14651 / NBRC 100331 / OCM 82 / Marburg) (Methanobacterium thermoautotrophicum).